Reading from the N-terminus, the 115-residue chain is Guanylin (115 aa).

Positions 1 to 23 are cleaved as a signal peptide; that stretch reads MNAWLLSVLCLLGALAVLVEGVT. Positions 24–100 are excised as a propeptide; it reads VQDGDLSFPL…LQRLEAIAQD (77 aa). Intrachain disulfides connect Cys-69–Cys-82, Cys-104–Cys-112, and Cys-107–Cys-115.

Belongs to the guanylin family. Intestine and in low abundance in adrenal gland, kidney, and uterus/oviduct.

It localises to the secreted. Its function is as follows. Endogenous activator of intestinal guanylate cyclase. It stimulates this enzyme through the same receptor binding region as the heat-stable enterotoxins. The polypeptide is Guanylin (Guca2a) (Rattus norvegicus (Rat)).